The following is a 90-amino-acid chain: uncharacterized protein (90 aa).

Residues 1–26 (MFESEAELRRIRIALVWIAVFLLFGA) form the signal peptide.

This is an uncharacterized protein from Bacillus subtilis (strain 168).